The chain runs to 261 residues: Zinc import ATP-binding protein ZnuC (261 aa).

The ABC transporter domain maps to 6 to 221 (IRLEQVGVTF…PAFVELFGKN (216 aa)). 38-45 (GPNGAGKT) contributes to the ATP binding site.

Belongs to the ABC transporter superfamily. Zinc importer (TC 3.A.1.15.5) family. In terms of assembly, the complex is composed of two ATP-binding proteins (ZnuC), two transmembrane proteins (ZnuB) and a solute-binding protein (ZnuA).

Its subcellular location is the cell inner membrane. It catalyses the reaction Zn(2+)(out) + ATP(in) + H2O(in) = Zn(2+)(in) + ADP(in) + phosphate(in) + H(+)(in). Its function is as follows. Part of the ABC transporter complex ZnuABC involved in zinc import. Responsible for energy coupling to the transport system. This is Zinc import ATP-binding protein ZnuC from Pseudomonas fluorescens (strain ATCC BAA-477 / NRRL B-23932 / Pf-5).